Here is a 106-residue protein sequence, read N- to C-terminus: ATP-dependent Clp protease adapter protein ClpS (106 aa).

Belongs to the ClpS family. Binds to the N-terminal domain of the chaperone ClpA.

Functionally, involved in the modulation of the specificity of the ClpAP-mediated ATP-dependent protein degradation. This is ATP-dependent Clp protease adapter protein ClpS from Escherichia coli O139:H28 (strain E24377A / ETEC).